The chain runs to 238 residues: Ribonuclease 3 (238 aa).

The RNase III domain maps to 4–127 (IEEFEKRLGY…TMGAIYLETG (124 aa)). Glu40 serves as a coordination point for Mg(2+). Asp44 is an active-site residue. Positions 113 and 116 each coordinate Mg(2+). The active site involves Glu116. The DRBM domain maps to 154–223 (DYKTALQELT…ARIALEIFHR (70 aa)).

Belongs to the ribonuclease III family. Homodimer. Mg(2+) serves as cofactor.

The protein localises to the cytoplasm. The enzyme catalyses Endonucleolytic cleavage to 5'-phosphomonoester.. Its function is as follows. Digests double-stranded RNA. Involved in the processing of primary rRNA transcript to yield the immediate precursors to the large and small rRNAs (23S and 16S). Processes some mRNAs, and tRNAs when they are encoded in the rRNA operon. Processes pre-crRNA and tracrRNA of type II CRISPR loci if present in the organism. The polypeptide is Ribonuclease 3 (Wolinella succinogenes (strain ATCC 29543 / DSM 1740 / CCUG 13145 / JCM 31913 / LMG 7466 / NCTC 11488 / FDC 602W) (Vibrio succinogenes)).